A 102-amino-acid chain; its full sequence is uncharacterized protein (102 aa).

This is an uncharacterized protein from Haemophilus influenzae (strain ATCC 51907 / DSM 11121 / KW20 / Rd).